Reading from the N-terminus, the 131-residue chain is Peptide methionine sulfoxide reductase MsrB (131 aa).

The MsrB domain maps to 8-130 (LEEWKQMLDP…NSVCLDLVPR (123 aa)). Positions 47, 50, 96, and 99 each coordinate Zn(2+). The active-site Nucleophile is Cys119.

The protein belongs to the MsrB Met sulfoxide reductase family. It depends on Zn(2+) as a cofactor.

The catalysed reaction is L-methionyl-[protein] + [thioredoxin]-disulfide + H2O = L-methionyl-(R)-S-oxide-[protein] + [thioredoxin]-dithiol. The protein is Peptide methionine sulfoxide reductase MsrB of Pseudomonas syringae pv. syringae (strain B728a).